Reading from the N-terminus, the 210-residue chain is Calaxin (210 aa).

EF-hand domains follow at residues 64–99 (TDDM…FLRG), 100–135 (TLDE…SLIR), and 145–180 (GIKD…ENLL). The Ca(2+) site is built by aspartate 77, aspartate 79, aspartate 81, tyrosine 83, glutamate 88, aspartate 113, asparagine 115, aspartate 117, tyrosine 119, glutamate 124, aspartate 158, aspartate 160, aspartate 162, arginine 164, and aspartate 169.

As to quaternary structure, component of the outer dynein arm-docking complex along with ODAD1, ODAD2, ODAD3 and ODAD4.

Its subcellular location is the cytoplasm. It is found in the cytoskeleton. The protein resides in the cilium axoneme. It localises to the cell projection. The protein localises to the cilium. Its subcellular location is the flagellum. In terms of biological role, component of the outer dynein arm-docking complex (ODA-DC) that mediates outer dynein arms (ODA) binding onto the doublet microtubule. Seems to regulate the assembly of both ODAs and their axonemal docking complex onto ciliary microtubules. Regulates ciliary and flagellar motility and is required for cilia-driven determination of body laterality. Regulates ciliary motility and is required for cilia-driven determination of body laterality. This chain is Calaxin (clxn), found in Danio rerio (Zebrafish).